The primary structure comprises 58 residues: Ikitoxin (58 aa).

The 56-residue stretch at 3-58 (VPGNYPLDKDGNTYKCFLLGENEECLNVCKLHGVQYGYCYASKCWCEYLEDDKDSV) folds into the LCN-type CS-alpha/beta domain. 3 disulfides stabilise this stretch: C18–C41, C27–C46, and C31–C48.

In terms of tissue distribution, expressed by the venom gland.

It is found in the secreted. Functionally, beta toxins bind voltage-independently at site-4 of sodium channels (Nav) and shift the voltage of activation toward more negative potentials thereby affecting sodium channel activation and promoting spontaneous and repetitive firing. Does not produce effect when administered to blowfly and cabbage looper larvae. In mice, does not produce convulsions, tremors, increased ventilation nor death. The polypeptide is Ikitoxin (Parabuthus transvaalicus (Transvaal thick-tailed scorpion)).